The sequence spans 97 residues: Putative ankyrin repeat protein RBE_0357 (97 aa).

The ANK repeat unit spans residues 24-54 (YGKTALHYAYTKRNIDIIKILLKCPGIKICI).

In Rickettsia bellii (strain RML369-C), this protein is Putative ankyrin repeat protein RBE_0357.